A 212-amino-acid chain; its full sequence is Large ribosomal subunit protein bL25 (212 aa).

Positions methionine 1–lysine 16 are enriched in basic and acidic residues. Positions methionine 1–leucine 22 are disordered.

It belongs to the bacterial ribosomal protein bL25 family. CTC subfamily. Part of the 50S ribosomal subunit; part of the 5S rRNA/L5/L18/L25 subcomplex. Contacts the 5S rRNA. Binds to the 5S rRNA independently of L5 and L18.

In terms of biological role, this is one of the proteins that binds to the 5S RNA in the ribosome where it forms part of the central protuberance. This chain is Large ribosomal subunit protein bL25, found in Bdellovibrio bacteriovorus (strain ATCC 15356 / DSM 50701 / NCIMB 9529 / HD100).